A 1199-amino-acid polypeptide reads, in one-letter code: Chromatin structure-remodeling complex subunit snf21 (1199 aa).

The 73-residue stretch at 256–328 (QRSDRERRLK…AKQRLQALKE (73 aa)) folds into the HSA domain. Residues 429–594 (ISLYNNHLNG…WALLNFVLPR (166 aa)) enclose the Helicase ATP-binding domain. ATP is bound at residue 442–449 (DEMGLGKT). The DEGH box motif lies at 544-547 (DEGH). A Helicase C-terminal domain is found at 740 to 903 (LLDRILPKLF…STPEEREAFL (164 aa)). Positions 1017–1059 (MESEARPTRGRPKRNIASVDETPALTLNGKPKKKRGPAPDTLT) are disordered. A Bromo domain is found at 1061–1171 (EHRSLLRRVC…TAMETKIEEL (111 aa)).

The protein belongs to the SNF2/RAD54 helicase family. Component of the RSC complex composed of at least arp9, arp42, rsc1, rsc4, rsc7, rsc9, rsc58, sfh1, snf21, ssr1, ssr2, ssr3 and ssr4. The complex interacts with histone and histone variant components of centromeric chromatin.

The protein resides in the nucleus. Its function is as follows. Helicase. Component of the chromatin structure remodeling complex (RSC), which is involved in transcription regulation and nucleosome positioning. Controls particularly membrane and organelle development genes. The chain is Chromatin structure-remodeling complex subunit snf21 (snf21) from Schizosaccharomyces pombe (strain 972 / ATCC 24843) (Fission yeast).